The chain runs to 431 residues: Probable prephenate dehydrogenase [NADP(+)] (431 aa).

NADP(+) is bound at residue 5–34; sequence FQVGIIGFGDMGRLYAEYISKAGWRVNVCD. The Prephenate/arogenate dehydrogenase domain maps to 5-285; sequence FQVGIIGFGD…GENMDRNSSG (281 aa).

Belongs to the prephenate/arogenate dehydrogenase family.

It is found in the cytoplasm. It carries out the reaction prephenate + NADP(+) = 3-(4-hydroxyphenyl)pyruvate + CO2 + NADPH. Its pathway is amino-acid biosynthesis; L-tyrosine biosynthesis; (4-hydroxyphenyl)pyruvate from prephenate (NADP(+) route): step 1/1. The sequence is that of Probable prephenate dehydrogenase [NADP(+)] (tyr1) from Schizosaccharomyces pombe (strain 972 / ATCC 24843) (Fission yeast).